The sequence spans 1250 residues: Phospholipid-transporting ATPase IC (1250 aa).

Composition is skewed to acidic residues over residues 1-13 (MDTDYESTYEDDS) and 24-40 (SDDETDDELDSPQTDEP). A disordered region spans residues 1–52 (MDTDYESTYEDDSQVPNDDVVPYSDDETDDELDSPQTDEPEQNRRNVQAEQS). Topologically, residues 1 to 133 (MDTDYESTYE…VLLILQTIPQ (133 aa)) are cytoplasmic. Residues 134–154 (ISTVTWSTTLIPLLLVLGITA) form a helical membrane-spanning segment. At 155 to 338 (IKDLVDDIAR…TKIDYLMNYM (184 aa)) the chain is on the exoplasmic loop side. The helical transmembrane segment at 339 to 359 (VYTIFVLLILAAAGLAIGQTF) threads the bilayer. Topologically, residues 360–385 (WEAKLGAANVSWYLYDGNNYSPSYRG) are cytoplasmic. The chain crosses the membrane as a helical span at residues 386–406 (FLAFWGYIIVLNTMVPISLYV). The Exoplasmic loop portion of the chain corresponds to 407–956 (SVEVIRLGQS…KFLRYFFYKN (550 aa)). The active-site 4-aspartylphosphate intermediate is the D454. The ATP site is built by D454, K455, T456, E553, F594, K617, R650, T730, G731, D732, R865, and K871. Mg(2+) is bound at residue D454. T456 serves as a coordination point for Mg(2+). D891 lines the Mg(2+) pocket. Residues N894 and D895 each contribute to the ATP site. Mg(2+) is bound at residue D895. A helical membrane pass occupies residues 957 to 977 (FSFTLVHFWYSFFNGFSAQTV). Topologically, residues 978–980 (YED) are cytoplasmic. The chain crosses the membrane as a helical span at residues 981 to 1001 (WFITLYNVLYSSLPVLLVGLL). At 1002–1034 (DQDVSDKLSLAFPRLYVPGQKDLLFNYKKFFLS) the chain is on the exoplasmic loop side. The helical transmembrane segment at 1035 to 1055 (LFHGIVTSLIIFFIPYGAFLL) threads the bilayer. The Cytoplasmic segment spans residues 1056–1069 (TMGQDGEAPSDYQS). Residues 1070-1090 (FAVTTATALVITVNFQIGLDT) form a helical membrane-spanning segment. The Exoplasmic loop portion of the chain corresponds to 1091–1092 (SY). Residues 1093–1113 (WTFVNAFSIFGSIAIYFGIMF) form a helical membrane-spanning segment. At 1114–1117 (DLHS) the chain is on the cytoplasmic side. Residues 1118–1138 (AGIHVLFPSMFIFTGAAPNAL) traverse the membrane as a helical segment. The Exoplasmic loop portion of the chain corresponds to 1139 to 1140 (RQ). A helical membrane pass occupies residues 1141-1161 (PYLWLTIILTVAFCLLPIVAL). Residues 1162–1250 (RFLAKTIWPS…AQITHFTPQT (89 aa)) lie on the Cytoplasmic side of the membrane.

Belongs to the cation transport ATPase (P-type) (TC 3.A.3) family. Type IV subfamily. In terms of assembly, component of a P4-ATPase flippase complex which consists of a catalytic alpha subunit and an accessory beta subunit. The flippase ATP8B1:TMEM30A complex can form an intermediate phosphoenzyme in vitro. Also interacts with beta subunit TMEM30B. Mg(2+) serves as cofactor.

It is found in the cell membrane. The protein localises to the apical cell membrane. The protein resides in the cell projection. It localises to the stereocilium. Its subcellular location is the endoplasmic reticulum. It is found in the golgi apparatus. It carries out the reaction ATP + H2O + phospholipidSide 1 = ADP + phosphate + phospholipidSide 2.. It catalyses the reaction a 1,2-diacyl-sn-glycero-3-phospho-L-serine(out) + ATP + H2O = a 1,2-diacyl-sn-glycero-3-phospho-L-serine(in) + ADP + phosphate + H(+). Catalytic component of a P4-ATPase flippase complex which catalyzes the hydrolysis of ATP coupled to the transport of aminophospholipids from the outer to the inner leaflet of various membranes and ensures the maintenance of asymmetric distribution of phospholipids. Phospholipid translocation also seems to be implicated in vesicle formation and in uptake of lipid signaling molecules. May also participate in the establishment of the canalicular membrane integrity by ensuring asymmetric distribution of phospholipids in the canicular membrane. This Xenopus tropicalis (Western clawed frog) protein is Phospholipid-transporting ATPase IC (atp8b1).